Reading from the N-terminus, the 168-residue chain is GTP-dependent dephospho-CoA kinase (168 aa).

GTP-binding residues include Asp40, Val41, Val42, Asp59, and Glu112.

Belongs to the GTP-dependent DPCK family.

It catalyses the reaction 3'-dephospho-CoA + GTP = GDP + CoA + H(+). It participates in cofactor biosynthesis; coenzyme A biosynthesis. Its function is as follows. Catalyzes the GTP-dependent phosphorylation of the 3'-hydroxyl group of dephosphocoenzyme A to form coenzyme A (CoA). This Methanoregula boonei (strain DSM 21154 / JCM 14090 / 6A8) protein is GTP-dependent dephospho-CoA kinase.